A 157-amino-acid polypeptide reads, in one-letter code: Small ribosomal subunit protein uS7cz/uS7cy (157 aa).

Belongs to the universal ribosomal protein uS7 family. Part of the 30S ribosomal subunit.

The protein resides in the plastid. It is found in the chloroplast. In terms of biological role, one of the primary rRNA binding proteins, it binds directly to 16S rRNA where it nucleates assembly of the head domain of the 30S subunit. In Gnetum parvifolium (Small-leaved jointfir), this protein is Small ribosomal subunit protein uS7cz/uS7cy (rps7-A).